The primary structure comprises 394 residues: Elongation factor Tu 1 (394 aa).

In terms of domain architecture, tr-type G spans 10–204 (KPHVNVGTIG…FLDSYIPEPE (195 aa)). The G1 stretch occupies residues 19 to 26 (GHVDHGKT). 19–26 (GHVDHGKT) is a binding site for GTP. A Mg(2+)-binding site is contributed by T26. Residues 60–64 (GITIN) form a G2 region. Residues 81–84 (DCPG) are G3. GTP-binding positions include 81-85 (DCPGH) and 136-139 (NKCD). A G4 region spans residues 136 to 139 (NKCD). Positions 174-176 (SAL) are G5.

The protein belongs to the TRAFAC class translation factor GTPase superfamily. Classic translation factor GTPase family. EF-Tu/EF-1A subfamily. In terms of assembly, monomer.

The protein resides in the cytoplasm. It carries out the reaction GTP + H2O = GDP + phosphate + H(+). Functionally, GTP hydrolase that promotes the GTP-dependent binding of aminoacyl-tRNA to the A-site of ribosomes during protein biosynthesis. The chain is Elongation factor Tu 1 from Shigella flexneri serotype 5b (strain 8401).